A 730-amino-acid polypeptide reads, in one-letter code: DNA ligase (730 aa).

The interval methionine 1 to leucine 23 is disordered. NAD(+) contacts are provided by residues aspartate 44–aspartate 48, serine 93–leucine 94, and glutamate 124. Residue lysine 126 is the N6-AMP-lysine intermediate of the active site. NAD(+)-binding residues include arginine 147, glutamate 184, lysine 300, and lysine 324. Residues cysteine 418, cysteine 421, cysteine 437, and cysteine 443 each contribute to the Zn(2+) site. The 90-residue stretch at glutamate 638 to proline 727 folds into the BRCT domain.

This sequence belongs to the NAD-dependent DNA ligase family. LigA subfamily. Mg(2+) serves as cofactor. The cofactor is Mn(2+).

It carries out the reaction NAD(+) + (deoxyribonucleotide)n-3'-hydroxyl + 5'-phospho-(deoxyribonucleotide)m = (deoxyribonucleotide)n+m + AMP + beta-nicotinamide D-nucleotide.. In terms of biological role, DNA ligase that catalyzes the formation of phosphodiester linkages between 5'-phosphoryl and 3'-hydroxyl groups in double-stranded DNA using NAD as a coenzyme and as the energy source for the reaction. It is essential for DNA replication and repair of damaged DNA. This chain is DNA ligase, found in Streptomyces avermitilis (strain ATCC 31267 / DSM 46492 / JCM 5070 / NBRC 14893 / NCIMB 12804 / NRRL 8165 / MA-4680).